Consider the following 40-residue polypeptide: MADTTGRIPLWLIGTVTGIPVIGSMGIFFYGSYSGLGSSL.

The helical transmembrane segment at 8-28 (IPLWLIGTVTGIPVIGSMGIF) threads the bilayer.

Belongs to the PsbJ family. PSII is composed of 1 copy each of membrane proteins PsbA, PsbB, PsbC, PsbD, PsbE, PsbF, PsbH, PsbI, PsbJ, PsbK, PsbL, PsbM, PsbT, PsbX, PsbY, PsbZ, Psb30/Ycf12, at least 3 peripheral proteins of the oxygen-evolving complex and a large number of cofactors. It forms dimeric complexes.

The protein resides in the plastid. Its subcellular location is the chloroplast thylakoid membrane. In terms of biological role, one of the components of the core complex of photosystem II (PSII). PSII is a light-driven water:plastoquinone oxidoreductase that uses light energy to abstract electrons from H(2)O, generating O(2) and a proton gradient subsequently used for ATP formation. It consists of a core antenna complex that captures photons, and an electron transfer chain that converts photonic excitation into a charge separation. The chain is Photosystem II reaction center protein J from Illicium oligandrum (Star anise).